A 648-amino-acid polypeptide reads, in one-letter code: Macrolide export ATP-binding/permease protein MacB (648 aa).

An ABC transporter domain is found at 5-243 (LELCNVSRSY…QGVDAAVVNT (239 aa)). 41 to 48 (GVSGSGKS) contributes to the ATP binding site. The next 5 membrane-spanning stretches (helical) occupy residues 273–293 (LLTMLGIIIGIASVVSIVVVG), 417–437 (ANVVGEVVLVGNMPVIVIGVA), 523–543 (LFLTLVAVISLVVGGIGVMNI), 578–598 (LVCLVGGALGISLSMFIAFML), and 611–631 (LTALASAFLCSTFTGILFGWL).

The protein belongs to the ABC transporter superfamily. Macrolide exporter (TC 3.A.1.122) family. Homodimer. Part of the tripartite efflux system MacAB-TolC, which is composed of an inner membrane transporter, MacB, a periplasmic membrane fusion protein, MacA, and an outer membrane component, TolC. The complex forms a large protein conduit and can translocate molecules across both the inner and outer membranes. Interacts with MacA.

It localises to the cell inner membrane. Part of the tripartite efflux system MacAB-TolC. MacB is a non-canonical ABC transporter that contains transmembrane domains (TMD), which form a pore in the inner membrane, and an ATP-binding domain (NBD), which is responsible for energy generation. Confers resistance against macrolides. The protein is Macrolide export ATP-binding/permease protein MacB of Salmonella paratyphi A (strain ATCC 9150 / SARB42).